The sequence spans 391 residues: Processive diacylglycerol beta-glucosyltransferase (391 aa).

It belongs to the glycosyltransferase 28 family. UgtP subfamily.

Its subcellular location is the cell membrane. The catalysed reaction is a 1,2-diacyl-3-O-(beta-D-glucopyranosyl)-sn-glycerol + UDP-alpha-D-glucose = a 1,2-diacyl-3-O-(beta-D-Glc-(1-&gt;6)-beta-D-Glc)-sn-glycerol + UDP + H(+). The enzyme catalyses a 1,2-diacyl-sn-glycerol + UDP-alpha-D-glucose = a 1,2-diacyl-3-O-(beta-D-glucopyranosyl)-sn-glycerol + UDP + H(+). Its pathway is glycolipid metabolism; diglucosyl-diacylglycerol biosynthesis. Its function is as follows. Processive glucosyltransferase involved in the biosynthesis of both the bilayer- and non-bilayer-forming membrane glucolipids. Is able to successively transfer two glucosyl residues to diacylglycerol (DAG), thereby catalyzing the formation of beta-monoglucosyl-DAG (3-O-(beta-D-glucopyranosyl)-1,2-diacyl-sn-glycerol) and beta-diglucosyl-DAG (3-O-(beta-D-glucopyranosyl-beta-(1-&gt;6)-D-glucopyranosyl)-1,2-diacyl-sn-glycerol). Beta-diglucosyl-DAG is the predominant glycolipid found in Bacillales and is also used as a membrane anchor for lipoteichoic acid (LTA). This chain is Processive diacylglycerol beta-glucosyltransferase, found in Staphylococcus aureus (strain MW2).